The following is a 172-amino-acid chain: Thioredoxin M-type, chloroplastic (172 aa).

The N-terminal 60 residues, 1–60 (MALESLFKSIHTKTSLSSSIVFIFKGKACLLTSKSRIQESFAELNSFTSLVLLIENHVLL), are a transit peptide targeting the chloroplast. The Thioredoxin domain maps to 61-172 (HAREAVNEVQ…TLSEKVEKYI (112 aa)). Active-site nucleophile residues include cysteine 97 and cysteine 100. Cysteine 97 and cysteine 100 are disulfide-bonded.

It belongs to the thioredoxin family. Plant M-type subfamily. Forms a complex with heterodimeric ferredoxin-thioredoxin reductase (FTR) and ferredoxin.

The protein resides in the plastid. The protein localises to the chloroplast. Participates in various redox reactions through the reversible oxidation of the active center dithiol to a disulfide. The M form is known to activate NADP-malate dehydrogenase. The sequence is that of Thioredoxin M-type, chloroplastic from Pisum sativum (Garden pea).